We begin with the raw amino-acid sequence, 355 residues long: 3'-5' exonuclease (355 aa).

The disordered stretch occupies residues 1–119; it reads MDKFLIKMPI…TPSPEKVKPE (119 aa). 2 stretches are compositionally biased toward basic and acidic residues: residues 13-29 and 71-91; these read KNNETPEQKPIVKKETP and KNLDTLEVNTEKNTAESENPP. Residues Ser-104 and Ser-112 each carry the phosphoserine modification. Residues 154-315 form the 3'-5' exonuclease domain; the sequence is TDVDVVPMAF…GQVIYRDLEQ (162 aa). Asp-164, Glu-166, and Asp-302 together coordinate Mg(2+).

Belongs to the WRNexo family.

The protein resides in the nucleus. In terms of biological role, has exonuclease activity on both single-stranded and duplex templates bearing overhangs, but not blunt ended duplex DNA, and cleaves in a 3'-5' direction. Essential for the formation of DNA replication focal centers. Has an important role in maintaining genome stability. The protein is 3'-5' exonuclease of Drosophila persimilis (Fruit fly).